The following is a 397-amino-acid chain: Exodeoxyribonuclease 7 large subunit (397 aa).

Belongs to the XseA family. Heterooligomer composed of large and small subunits.

The protein resides in the cytoplasm. It carries out the reaction Exonucleolytic cleavage in either 5'- to 3'- or 3'- to 5'-direction to yield nucleoside 5'-phosphates.. Its function is as follows. Bidirectionally degrades single-stranded DNA into large acid-insoluble oligonucleotides, which are then degraded further into small acid-soluble oligonucleotides. The polypeptide is Exodeoxyribonuclease 7 large subunit (Anaplasma marginale (strain St. Maries)).